A 276-amino-acid chain; its full sequence is Formamidopyrimidine-DNA glycosylase (276 aa).

Residue Pro2 is the Schiff-base intermediate with DNA of the active site. The Proton donor role is filled by Glu3. Lys58 acts as the Proton donor; for beta-elimination activity in catalysis. Residues His92, Arg111, and Lys154 each contribute to the DNA site. An FPG-type zinc finger spans residues 239-273; that stretch reads QVYGHAGEECNNCGTILEKIKVNGRGTTFCPHCQV. Catalysis depends on Arg263, which acts as the Proton donor; for delta-elimination activity.

It belongs to the FPG family. In terms of assembly, monomer. Zn(2+) serves as cofactor.

The catalysed reaction is Hydrolysis of DNA containing ring-opened 7-methylguanine residues, releasing 2,6-diamino-4-hydroxy-5-(N-methyl)formamidopyrimidine.. The enzyme catalyses 2'-deoxyribonucleotide-(2'-deoxyribose 5'-phosphate)-2'-deoxyribonucleotide-DNA = a 3'-end 2'-deoxyribonucleotide-(2,3-dehydro-2,3-deoxyribose 5'-phosphate)-DNA + a 5'-end 5'-phospho-2'-deoxyribonucleoside-DNA + H(+). Functionally, involved in base excision repair of DNA damaged by oxidation or by mutagenic agents. Acts as a DNA glycosylase that recognizes and removes damaged bases. Has a preference for oxidized purines, such as 7,8-dihydro-8-oxoguanine (8-oxoG). Has AP (apurinic/apyrimidinic) lyase activity and introduces nicks in the DNA strand. Cleaves the DNA backbone by beta-delta elimination to generate a single-strand break at the site of the removed base with both 3'- and 5'-phosphates. This is Formamidopyrimidine-DNA glycosylase from Lactobacillus johnsonii (strain CNCM I-12250 / La1 / NCC 533).